The sequence spans 106 residues: Large ribosomal subunit protein uL24 (106 aa).

Belongs to the universal ribosomal protein uL24 family. In terms of assembly, part of the 50S ribosomal subunit.

Functionally, one of two assembly initiator proteins, it binds directly to the 5'-end of the 23S rRNA, where it nucleates assembly of the 50S subunit. In terms of biological role, one of the proteins that surrounds the polypeptide exit tunnel on the outside of the subunit. The polypeptide is Large ribosomal subunit protein uL24 (Rhodospirillum rubrum (strain ATCC 11170 / ATH 1.1.1 / DSM 467 / LMG 4362 / NCIMB 8255 / S1)).